The sequence spans 310 residues: Ribose-phosphate pyrophosphokinase (310 aa).

Residues 34 to 36 (DQE) and 93 to 94 (RQ) contribute to the ATP site. Mg(2+)-binding residues include His127 and Asp167. The active site involves Lys190. D-ribose 5-phosphate-binding positions include Arg192, Asp216, and 220 to 224 (DSGGT).

The protein belongs to the ribose-phosphate pyrophosphokinase family. Class I subfamily. As to quaternary structure, homohexamer. Mg(2+) is required as a cofactor.

The protein resides in the cytoplasm. The enzyme catalyses D-ribose 5-phosphate + ATP = 5-phospho-alpha-D-ribose 1-diphosphate + AMP + H(+). The protein operates within metabolic intermediate biosynthesis; 5-phospho-alpha-D-ribose 1-diphosphate biosynthesis; 5-phospho-alpha-D-ribose 1-diphosphate from D-ribose 5-phosphate (route I): step 1/1. Its function is as follows. Involved in the biosynthesis of the central metabolite phospho-alpha-D-ribosyl-1-pyrophosphate (PRPP) via the transfer of pyrophosphoryl group from ATP to 1-hydroxyl of ribose-5-phosphate (Rib-5-P). In Rhizobium meliloti (strain 1021) (Ensifer meliloti), this protein is Ribose-phosphate pyrophosphokinase.